A 231-amino-acid chain; its full sequence is Uracil phosphoribosyltransferase (231 aa).

Residue 38 to 42 (KGLVR) participates in GTP binding. 5-phospho-alpha-D-ribose 1-diphosphate-binding positions include Arg87, Arg112, and 140–148 (DPMIATGST). Residues Ile203 and 208–210 (GDA) contribute to the uracil site. Asp209 serves as a coordination point for 5-phospho-alpha-D-ribose 1-diphosphate.

The protein belongs to the UPRTase family. Mg(2+) serves as cofactor.

The enzyme catalyses UMP + diphosphate = 5-phospho-alpha-D-ribose 1-diphosphate + uracil. It participates in pyrimidine metabolism; UMP biosynthesis via salvage pathway; UMP from uracil: step 1/1. With respect to regulation, allosterically activated by GTP. Catalyzes the conversion of uracil and 5-phospho-alpha-D-ribose 1-diphosphate (PRPP) to UMP and diphosphate. This is Uracil phosphoribosyltransferase from Methanococcus maripaludis (strain C7 / ATCC BAA-1331).